The sequence spans 130 residues: MGLLLILVGIGGGLGAMSRFALTQATASISKQIPIGILLCNIIGSLIIGMMAAFLIQTKLFNEDISTYVRSLFVTGFLGGFTTFSSFSLDILNLLQRGEALLAISYILVSVIVSLIAVILGFYFIMGIYR.

Transmembrane regions (helical) follow at residues 2-22 (GLLL…RFAL), 35-55 (IGIL…AAFL), 72-92 (LFVT…LDIL), and 107-127 (ILVS…FIMG). Na(+) contacts are provided by glycine 79 and threonine 82.

It belongs to the fluoride channel Fluc/FEX (TC 1.A.43) family.

Its subcellular location is the cell inner membrane. It carries out the reaction fluoride(in) = fluoride(out). With respect to regulation, na(+) is not transported, but it plays an essential structural role and its presence is essential for fluoride channel function. Its function is as follows. Fluoride-specific ion channel. Important for reducing fluoride concentration in the cell, thus reducing its toxicity. The sequence is that of Fluoride-specific ion channel FluC from Francisella philomiragia subsp. philomiragia (strain ATCC 25017 / CCUG 19701 / FSC 153 / O#319-036).